A 674-amino-acid chain; its full sequence is MVQFLGKQGTAGELIHMVTLDKTGKKSFGICIVRGEVKDSPNTKTTGIFIKGIVPDSPAHLCGRLKVGDRILSLNGKDVRNSTEQAVIDLIKEADFKIELEIQTFDKSDEQQAKSDPRSNGYMQAKNKFNQEQTTNNNASGGQGMGQGQGQGQGMAGMNRQQSMQKRNTTFTASMRQKHSNYADEDDEDTRDMTGRIRTEAGYEIDRASAGNCKLNKQEKDRDKEQEDEFGYTMAKINKRYNMMKDLRRIEVQRDASKPLGLALAGHKDRQKMACFVAGVDPNGALGSVDIKPGDEIVEVNGNVLKNRCHLNASAVFKNVDGDKLVMITSRRKPNDEGMCVKPIKKFPTASDETKFIFDQFPKARTVQVRKEGFLGIMVIYGKHAEVGSGIFISDLREGSNAELAGVKVGDMLLAVNQDVTLESNYDDATGLLKRAEGVVTMILLTLKSEEAIKAEKAAEEKKKEEAKKEEEKPQEPATAEIKPNKKILIELKVEKKPMGVIVCGGKNNHVTTGCVITHVYPEGQVAADKRLKIFDHICDINGTPIHVGSMTTLKVHQLFHTTYEKAVTLTVFRADPPELEKFNVDLMKKAGKELGLSLSPNEIGCTIADLIQGQYPEIDSKLQRGDIITKFNGDALEGLPFQVCYALFKGANGKVSMEVTRPKPTLRTEAPKA.

In terms of domain architecture, PDZ 1 spans 17–106 (MVTLDKTGKK…KIELEIQTFD (90 aa)). Residues 133-192 (QTTNNNASGGQGMGQGQGQGQGMAGMNRQQSMQKRNTTFTASMRQKHSNYADEDDEDTRD) are disordered. Gly residues predominate over residues 141–155 (GGQGMGQGQGQGQGM). Over residues 159 to 175 (NRQQSMQKRNTTFTASM) the composition is skewed to polar residues. PDZ domains follow at residues 249 to 332 (RIEV…TSRR) and 364 to 448 (ARTV…LTLK). Residues 458-475 (AAEEKKKEEAKKEEEKPQ) are compositionally biased toward basic and acidic residues. Residues 458 to 481 (AAEEKKKEEAKKEEEKPQEPATAE) form a disordered region. 2 PDZ domains span residues 489–577 (LIEL…RADP) and 584–664 (NVDL…TRPK). Residues S598 and S600 each carry the phosphoserine modification.

As to quaternary structure, interacts with the C-terminus of trp, and with norpA and inaC to form the inaD signaling complex. Interacts with Fkbp59, which together with trpl, rhodopsin and calmodulin may also be part of the inaD complex. In terms of processing, phosphorylated by inaC. In terms of tissue distribution, expressed in photoreceptor cells (R cells) of the compound eyes and ocelli.

It is found in the cell projection. Its subcellular location is the rhabdomere. Involved in the negative feedback regulation of the light-activated signaling cascade in photoreceptors through a calcium-mediated process. Interacts with tetrapeptide ligand located in C-terminal sequence of 3 key components of the visual cascade, tethering them and forming a macromolecular signaling phototransduction complex. The protein is Inactivation-no-after-potential D protein (inaD) of Drosophila melanogaster (Fruit fly).